Here is a 162-residue protein sequence, read N- to C-terminus: RNA replication protein (162 aa).

This sequence belongs to the potexvirus/carlavirus RNA replication protein family.

It carries out the reaction RNA(n) + a ribonucleoside 5'-triphosphate = RNA(n+1) + diphosphate. The enzyme catalyses ATP + H2O = ADP + phosphate + H(+). In terms of biological role, RNA replication. The central part of this protein possibly functions as an ATP-binding helicase. The protein is RNA replication protein of Lilium formosanum.